The primary structure comprises 182 residues: Large ribosomal subunit protein uL10 (182 aa).

The protein belongs to the universal ribosomal protein uL10 family. Part of the ribosomal stalk of the 50S ribosomal subunit. The N-terminus interacts with L11 and the large rRNA to form the base of the stalk. The C-terminus forms an elongated spine to which L12 dimers bind in a sequential fashion forming a multimeric L10(L12)X complex.

Its function is as follows. Forms part of the ribosomal stalk, playing a central role in the interaction of the ribosome with GTP-bound translation factors. This Microcystis aeruginosa (strain NIES-843 / IAM M-2473) protein is Large ribosomal subunit protein uL10.